The chain runs to 94 residues: Pyrimidine/purine nucleoside phosphorylase (94 aa).

It belongs to the nucleoside phosphorylase PpnP family.

The catalysed reaction is a purine D-ribonucleoside + phosphate = a purine nucleobase + alpha-D-ribose 1-phosphate. The enzyme catalyses adenosine + phosphate = alpha-D-ribose 1-phosphate + adenine. It catalyses the reaction cytidine + phosphate = cytosine + alpha-D-ribose 1-phosphate. It carries out the reaction guanosine + phosphate = alpha-D-ribose 1-phosphate + guanine. The catalysed reaction is inosine + phosphate = alpha-D-ribose 1-phosphate + hypoxanthine. The enzyme catalyses thymidine + phosphate = 2-deoxy-alpha-D-ribose 1-phosphate + thymine. It catalyses the reaction uridine + phosphate = alpha-D-ribose 1-phosphate + uracil. It carries out the reaction xanthosine + phosphate = alpha-D-ribose 1-phosphate + xanthine. Catalyzes the phosphorolysis of diverse nucleosides, yielding D-ribose 1-phosphate and the respective free bases. Can use uridine, adenosine, guanosine, cytidine, thymidine, inosine and xanthosine as substrates. Also catalyzes the reverse reactions. This chain is Pyrimidine/purine nucleoside phosphorylase, found in Pseudomonas putida (strain ATCC 700007 / DSM 6899 / JCM 31910 / BCRC 17059 / LMG 24140 / F1).